A 711-amino-acid chain; its full sequence is Polyribonucleotide nucleotidyltransferase (711 aa).

The tract at residues 77–80 is FFRR loop; important for RNA binding; the sequence is FFRR. The tract at residues 327–331 is interaction with RNase E; that stretch reads LDVRT. Asp-486 and Asp-492 together coordinate Mg(2+). Positions 553 to 612 constitute a KH domain; the sequence is PRIHTIKINPDKIKDVIGKGGSVIRALTEETGTTIEIEDDGTVKIAATDGEKAKHAIRRI. The region spanning 622–690 is the S1 motif domain; it reads GRVYTGKVTR…RQGRIRLSIK (69 aa). The interval 689 to 711 is disordered; sequence IKEATEQSQPAAAPEAPAAEQGE. Residues 694-711 show a composition bias toward low complexity; sequence EQSQPAAAPEAPAAEQGE.

It belongs to the polyribonucleotide nucleotidyltransferase family. As to quaternary structure, component of the RNA degradosome, which is a multiprotein complex involved in RNA processing and mRNA degradation. Interacts with RNase E (rne). Homotrimer. The homotrimer forms a ring-like structure with a central channel, where RNA molecules can bind. RNA molecules bind between neighboring subunits. Might interact with YicC. Requires Mg(2+) as cofactor. It depends on Mn(2+) as a cofactor.

It localises to the cytoplasm. The catalysed reaction is RNA(n+1) + phosphate = RNA(n) + a ribonucleoside 5'-diphosphate. In terms of biological role, involved in mRNA degradation. Catalyzes the phosphorolysis of single-stranded polyribonucleotides processively in the 3'- to 5'-direction. Also involved, along with RNase II, in tRNA processing. RNases II and R contribute to rRNA degradation during starvation, while RNase R and PNPase are the major contributors to quality control of rRNA during steady state growth. Contributes to degradation of some small RNAs (sRNA). This is Polyribonucleotide nucleotidyltransferase from Escherichia coli (strain K12).